Consider the following 405-residue polypeptide: 4-hydroxy-3-methylbut-2-en-1-yl diphosphate synthase (ferredoxin) (405 aa).

[4Fe-4S] cluster-binding residues include C314, C317, C348, and E355.

The protein belongs to the IspG family. [4Fe-4S] cluster is required as a cofactor.

It catalyses the reaction (2E)-4-hydroxy-3-methylbut-2-enyl diphosphate + 2 oxidized [2Fe-2S]-[ferredoxin] + H2O = 2-C-methyl-D-erythritol 2,4-cyclic diphosphate + 2 reduced [2Fe-2S]-[ferredoxin] + H(+). Its pathway is isoprenoid biosynthesis; isopentenyl diphosphate biosynthesis via DXP pathway; isopentenyl diphosphate from 1-deoxy-D-xylulose 5-phosphate: step 5/6. Its function is as follows. Converts 2C-methyl-D-erythritol 2,4-cyclodiphosphate (ME-2,4cPP) into 1-hydroxy-2-methyl-2-(E)-butenyl 4-diphosphate. The protein is 4-hydroxy-3-methylbut-2-en-1-yl diphosphate synthase (ferredoxin) of Prochlorococcus marinus subsp. pastoris (strain CCMP1986 / NIES-2087 / MED4).